A 656-amino-acid chain; its full sequence is uncharacterized protein (656 aa).

3 consecutive transmembrane segments (helical) span residues Q7–L27, L40–L60, and A210–I230. Positions T231–Q280 constitute an HAMP domain. The PAS domain maps to E289 to N359. The Histidine kinase domain maps to N424–K654. Position 427 is a phosphohistidine; by autocatalysis (H427).

The protein resides in the plastid. The protein localises to the chloroplast membrane. It carries out the reaction ATP + protein L-histidine = ADP + protein N-phospho-L-histidine.. This is an uncharacterized protein from Porphyra purpurea (Red seaweed).